Consider the following 24-residue polypeptide: Brevinin-1Pc (24 aa).

A disulfide bridge connects residues Cys18 and Cys24.

Expressed by the skin glands.

It is found in the secreted. In terms of biological role, antibacterial activity against Gram-positive bacterium S.aureus and Gram-negative bacterium E.coli. Has activity against C.albicans. This Lithobates pipiens (Northern leopard frog) protein is Brevinin-1Pc.